A 180-amino-acid polypeptide reads, in one-letter code: MTLKDIVVGFGTTVRSIWLIGMNAFAKRETLMYPEEPVYLPPRYRGRIVLTRDPDGQERCVACNLCAVACPVGCISLQKAETADGRWYPEFFRINFSRCIFCGLCEEACPTTAIQLTPDFELGEFKRQDLVYEKENLLISGPGKYPEYNFYRMAGMAIDGKDKGDAENEAKPIDVKGLLP.

2 4Fe-4S ferredoxin-type domains span residues 48–80 and 90–119; these read IVLT…LQKA and EFFR…LTPD. [4Fe-4S] cluster-binding residues include Cys-60, Cys-63, Cys-66, Cys-70, Cys-99, Cys-102, Cys-105, and Cys-109.

It belongs to the complex I 23 kDa subunit family. NDH-1 is composed of 13 different subunits. Subunits NuoA, H, J, K, L, M, N constitute the membrane sector of the complex. Requires [4Fe-4S] cluster as cofactor.

It is found in the cell inner membrane. It catalyses the reaction a quinone + NADH + 5 H(+)(in) = a quinol + NAD(+) + 4 H(+)(out). Functionally, NDH-1 shuttles electrons from NADH, via FMN and iron-sulfur (Fe-S) centers, to quinones in the respiratory chain. The immediate electron acceptor for the enzyme in this species is believed to be ubiquinone. Couples the redox reaction to proton translocation (for every two electrons transferred, four hydrogen ions are translocated across the cytoplasmic membrane), and thus conserves the redox energy in a proton gradient. The chain is NADH-quinone oxidoreductase subunit I from Erwinia tasmaniensis (strain DSM 17950 / CFBP 7177 / CIP 109463 / NCPPB 4357 / Et1/99).